A 400-amino-acid polypeptide reads, in one-letter code: ELAV-like protein 4 (400 aa).

Positions 12 to 48 are disordered; that stretch reads TMEPQVSNGPTSNTSNGPSSNSRNCPSPMQTGAATDD. Low complexity predominate over residues 18–33; the sequence is SNGPTSNTSNGPSSNS. Over residues 34 to 44 the composition is skewed to polar residues; that stretch reads RNCPSPMQTGA. RRM domains lie at 51 to 158, 166 to 246, and 317 to 395; these read TNLI…YARP, ANLY…FANN, and WCIF…FKTN.

This sequence belongs to the RRM elav family.

Its subcellular location is the cytoplasm. It is found in the perikaryon. The protein localises to the cell projection. The protein resides in the axon. It localises to the dendrite. Its subcellular location is the growth cone. RNA-binding protein that is involved in the post-transcriptional regulation of mRNAs. Plays a role in the regulation of mRNA stability, alternative splicing and translation. Binds to AU-rich element (ARE) sequences in the 3' untranslated region (3'UTR) of target mRNAs. Mainly plays a role in neuron-specific RNA processing. This Xenopus tropicalis (Western clawed frog) protein is ELAV-like protein 4 (elavl4).